Reading from the N-terminus, the 848-residue chain is Neuroligin-3 (848 aa).

The signal sequence occupies residues 1 to 37; that stretch reads MWLRLGPPSLSLSPKPTVGRSLCLTLWFLSLALRAST. Over 38–709 the chain is Extracellular; that stretch reads QAPAPTVNTH…NPRDYSTELS (672 aa). Residue Asn-98 is glycosylated (N-linked (GlcNAc...) asparagine). Residues Cys-106 and Cys-141 are joined by a disulfide bond. Positions 170–195 are disordered; that stretch reads RKGGSGAKKQGEDLADNDGDEDEDIR. Residues 182–194 show a composition bias toward acidic residues; the sequence is DLADNDGDEDEDI. 2 disulfides stabilise this stretch: Cys-340-Cys-351 and Cys-510-Cys-544. N-linked (GlcNAc...) asparagine glycosylation is present at Asn-545. Composition is skewed to polar residues over residues 645–656 and 677–689; these read TKVPPPDTTHSS and AYSNENAQGSWNG. Positions 645 to 694 are disordered; sequence TKVPPPDTTHSSHITRRPNGKTWSTKRPAISPAYSNENAQGSWNGDQDAG. The helical transmembrane segment at 710-730 threads the bilayer; the sequence is VTIAVGASLLFLNVLAFAALY. The Cytoplasmic segment spans residues 731-848; the sequence is YRKDKRRQEP…LPHSHSTTRV (118 aa). At Ser-745 the chain carries Phosphoserine. Tyr-792 bears the Phosphotyrosine mark.

The protein belongs to the type-B carboxylesterase/lipase family. Homodimer, and heterodimer with NLGN1 and NLGN2. Interacts with neurexins NRXN1, NRXN2 and NRXN3. Interaction with neurexins is mediated by heparan sulfate glycan modification on neurexin. Interacts (via its C-terminus) with DLG4/PSD-95 (via PDZ domain 3). Expressed in the blood vessel walls (at protein level). Detected in throughout the brain and in spinal cord. Detected in brain, and at lower levels in pancreas islet beta cells.

Its subcellular location is the cell membrane. It is found in the synapse. Functionally, cell surface protein involved in cell-cell-interactions via its interactions with neurexin family members. Plays a role in synapse function and synaptic signal transmission, and may mediate its effects by clustering other synaptic proteins. May promote the initial formation of synapses, but is not essential for this. May also play a role in glia-glia or glia-neuron interactions in the developing peripheral nervous system. The protein is Neuroligin-3 (NLGN3) of Homo sapiens (Human).